A 538-amino-acid chain; its full sequence is Putative cysteine ligase BshC (538 aa).

The protein belongs to the BshC family.

Involved in bacillithiol (BSH) biosynthesis. May catalyze the last step of the pathway, the addition of cysteine to glucosamine malate (GlcN-Mal) to generate BSH. The chain is Putative cysteine ligase BshC from Halalkalibacterium halodurans (strain ATCC BAA-125 / DSM 18197 / FERM 7344 / JCM 9153 / C-125) (Bacillus halodurans).